The sequence spans 102 residues: Putative pterin-4-alpha-carbinolamine dehydratase (102 aa).

Belongs to the pterin-4-alpha-carbinolamine dehydratase family.

It catalyses the reaction (4aS,6R)-4a-hydroxy-L-erythro-5,6,7,8-tetrahydrobiopterin = (6R)-L-erythro-6,7-dihydrobiopterin + H2O. The protein is Putative pterin-4-alpha-carbinolamine dehydratase of Burkholderia ambifaria (strain ATCC BAA-244 / DSM 16087 / CCUG 44356 / LMG 19182 / AMMD) (Burkholderia cepacia (strain AMMD)).